The following is an 88-amino-acid chain: Small ribosomal subunit protein uS15 (88 aa).

The protein belongs to the universal ribosomal protein uS15 family. In terms of assembly, part of the 30S ribosomal subunit. Forms a bridge to the 50S subunit in the 70S ribosome, contacting the 23S rRNA.

One of the primary rRNA binding proteins, it binds directly to 16S rRNA where it helps nucleate assembly of the platform of the 30S subunit by binding and bridging several RNA helices of the 16S rRNA. In terms of biological role, forms an intersubunit bridge (bridge B4) with the 23S rRNA of the 50S subunit in the ribosome. This is Small ribosomal subunit protein uS15 from Syntrophus aciditrophicus (strain SB).